The sequence spans 157 residues: Small ribosomal subunit protein uS7 (157 aa).

Belongs to the universal ribosomal protein uS7 family. As to quaternary structure, part of the 30S ribosomal subunit. Contacts proteins S9 and S11.

In terms of biological role, one of the primary rRNA binding proteins, it binds directly to 16S rRNA where it nucleates assembly of the head domain of the 30S subunit. Is located at the subunit interface close to the decoding center, probably blocks exit of the E-site tRNA. The polypeptide is Small ribosomal subunit protein uS7 (Protochlamydia amoebophila (strain UWE25)).